We begin with the raw amino-acid sequence, 185 residues long: uncharacterized protein (185 aa).

A G domain is found at 17–137 (GKSSIMNALF…QKPIIVVINK (121 aa)).

This is an uncharacterized protein from Methanocaldococcus jannaschii (strain ATCC 43067 / DSM 2661 / JAL-1 / JCM 10045 / NBRC 100440) (Methanococcus jannaschii).